Here is a 476-residue protein sequence, read N- to C-terminus: MLLQPESSSKPRNDSPPGFKFHSSCDTCLKAKIKCSQAKPTCARCLQQGRQCVYSPYRKIGRPSTKNLPLDQLQQPKGRTAGGTARRSLSRRVSLASPGIENGSRVGNVRHATNRVLHAQESVLVPSQTWSDQELTGNINRLDYGLEGTNWSALEGLLDASMSTLPQADHELASAVPRLDQVHDLDPNPGQEDLTGYLSPSSLSSRESLATTFPPEAEAGSFGLSSEFPFSAGYSLGTGPVLSESLNAFPVLSSFPSSASSPVTEARGFNLLSAPTDRCTFQCYPVLINILNDMNEFQRKSSGLPLDVLLNLDKRVRKVHETILGCPCCLVSCAAALTLMLITMVNINLLSLFERSCGSTDGGSGSSMSRGELNVAPRIAFGGGNYAGQDRSRNPLPYTTGHLTLGNIHLDETVKLVFSRRLVRLYLERQLGVVQQLSQLLGRVEGDGASIKVTQDLLRDQLRRLEHFVGFITLTD.

Positions 25–52 (CDTCLKAKIKCSQAKPTCARCLQQGRQC) form a DNA-binding region, zn(2)-C6 fungal-type. The tract at residues 63–92 (PSTKNLPLDQLQQPKGRTAGGTARRSLSRR) is disordered. Residues 64-77 (STKNLPLDQLQQPK) show a composition bias toward polar residues.

It localises to the nucleus. Transcriptional regulator; part of the cla gene cluster that produces clavatol and ortho-quinone methide. The clavatol biosynthesis cluster cla and the terrestric acid cluster tra are both involved in the production of peniphenones and penilactones. This Penicillium crustosum (Blue mold fungus) protein is Transcriptional regulator claA.